The sequence spans 287 residues: Hypersensitive-induced response protein-like protein 2 (287 aa).

Residue G2 is the site of N-myristoyl glycine attachment.

Functionally, positive regulator of hypersensitive response (HR)-like cell death. May be involved in potassium ion channel regulation. The protein is Hypersensitive-induced response protein-like protein 2 (HIRL2) of Oryza sativa subsp. japonica (Rice).